Here is an 892-residue protein sequence, read N- to C-terminus: von Willebrand factor A domain-containing protein 7 (892 aa).

The first 27 residues, 1 to 27 (MLPVEVPLSQLGPPVLLLQLLLPPTSA), serve as a signal peptide directing secretion. An N-linked (GlcNAc...) asparagine glycan is attached at asparagine 54. Positions 231-272 (YFGTNPPKPPGKCSHGGRFDQSSSQPPRGGINKDSTSPSFSP) are disordered. One can recognise a VWFA domain in the interval 313 to 495 (ASSLSFVLDT…HIRDVAAVVG (183 aa)).

The protein resides in the secreted. This Rattus norvegicus (Rat) protein is von Willebrand factor A domain-containing protein 7 (Vwa7).